The chain runs to 258 residues: Small ribosomal subunit protein mS40 (258 aa).

Residues 1–35 (MAASVLNTLLRRLPMLSLFRGAHRVQVPLQTLCTK) constitute a mitochondrion transit peptide. Serine 38 and serine 49 each carry phosphoserine. The interval 218–258 (RLYQGHLREESGPPPESMPKMPPTAPAEASFTGQTDPQSAL) is disordered. Positions 229 to 242 (GPPPESMPKMPPTA) are enriched in pro residues. The span at 248-258 (FTGQTDPQSAL) shows a compositional bias: polar residues.

It belongs to the bacterial ribosomal protein bS18 family. Mitochondrion-specific ribosomal protein mS40 subfamily. In terms of assembly, component of the mitochondrial ribosome small subunit (28S) which comprises a 12S rRNA and about 30 distinct proteins.

It localises to the mitochondrion. The sequence is that of Small ribosomal subunit protein mS40 (MRPS18B) from Macaca mulatta (Rhesus macaque).